The following is a 206-amino-acid chain: Dephospho-CoA kinase (206 aa).

Residues 6–206 form the DPCK domain; that stretch reads IIGLTGGIAS…KWKWKDWSKK (201 aa). Residue 14–19 coordinates ATP; the sequence is ASGKST.

The protein belongs to the CoaE family.

The protein resides in the cytoplasm. The catalysed reaction is 3'-dephospho-CoA + ATP = ADP + CoA + H(+). It functions in the pathway cofactor biosynthesis; coenzyme A biosynthesis; CoA from (R)-pantothenate: step 5/5. Functionally, catalyzes the phosphorylation of the 3'-hydroxyl group of dephosphocoenzyme A to form coenzyme A. This chain is Dephospho-CoA kinase, found in Carboxydothermus hydrogenoformans (strain ATCC BAA-161 / DSM 6008 / Z-2901).